A 427-amino-acid chain; its full sequence is Adenylosuccinate synthetase (427 aa).

Residues 12 to 18 and 40 to 42 each bind GTP; these read GDEGKGK and GHT. Aspartate 13 (proton acceptor) is an active-site residue. Mg(2+) contacts are provided by aspartate 13 and glycine 40. IMP is bound by residues 13 to 16, 38 to 41, threonine 128, arginine 142, glutamine 223, threonine 238, and arginine 302; these read DEGK and NAGH. Histidine 41 serves as the catalytic Proton donor. A substrate-binding site is contributed by 298 to 304; it reads TTTGRPR. Residues arginine 304, 330-332, and 412-414 each bind GTP; these read SID and SVG.

This sequence belongs to the adenylosuccinate synthetase family. Homodimer. Mg(2+) is required as a cofactor.

Its subcellular location is the cytoplasm. The catalysed reaction is IMP + L-aspartate + GTP = N(6)-(1,2-dicarboxyethyl)-AMP + GDP + phosphate + 2 H(+). It functions in the pathway purine metabolism; AMP biosynthesis via de novo pathway; AMP from IMP: step 1/2. Functionally, plays an important role in the de novo pathway of purine nucleotide biosynthesis. Catalyzes the first committed step in the biosynthesis of AMP from IMP. The polypeptide is Adenylosuccinate synthetase (Staphylococcus epidermidis (strain ATCC 12228 / FDA PCI 1200)).